The following is a 614-amino-acid chain: Zinc finger protein 276 (614 aa).

Residues 1 to 46 (MKRDRLGRFLSPGIARQRGGSGGGCGSGRTRGRPSRSGGTSADGAA) are disordered. Gly residues predominate over residues 19–29 (GGSGGGCGSGR). The ZAD domain occupies 78–164 (GHCRLCHGKF…LQRVNVSPAG (87 aa)). Zn(2+) contacts are provided by cysteine 80, cysteine 83, cysteine 137, and cysteine 140. The tract at residues 271–422 (RLAQNSESNP…PGPKPGWKKK (152 aa)) is disordered. Composition is skewed to polar residues over residues 272-282 (LAQNSESNPTG) and 291-302 (RETQVGSETKTL). The span at 357 to 369 (SDLSEGDFLSEDE) shows a compositional bias: acidic residues. The segment covering 386-408 (YPEKKVSGKKSEGREAKRPEEPK) has biased composition (basic and acidic residues). Residues 409–422 (IRKKPGPKPGWKKK) show a composition bias toward basic residues. 5 consecutive C2H2-type zinc fingers follow at residues 434–458 (YKCPYQGCTAVYRGADGMKKHIKEH), 465–490 (RPCPHPGCNKVFMIDRYLQRHVKLIH), 496–518 (YICDECGQTFKQRKHLLVHQMRH), 524–546 (LQCEVCGFQCRQRASLKYHMTKH), and 554–577 (FACDQCGRRFEKAHNLNVHMSMVH). Residues 588 to 614 (PLEAEPPPGPLSPSGTMEGQAVKPEPT) form a disordered region.

In terms of tissue distribution, found in all the examined tissues, with highest levels in kidney, liver, lung, and spleen.

It localises to the nucleus. Its subcellular location is the chromosome. It is found in the centromere. The protein resides in the kinetochore. May be involved in transcriptional regulation. This is Zinc finger protein 276 (Znf276) from Mus musculus (Mouse).